Here is a 69-residue protein sequence, read N- to C-terminus: Putative membrane protein insertion efficiency factor (69 aa).

The protein belongs to the UPF0161 family.

It is found in the cell membrane. In terms of biological role, could be involved in insertion of integral membrane proteins into the membrane. In Desulfitobacterium hafniense (strain Y51), this protein is Putative membrane protein insertion efficiency factor.